The primary structure comprises 170 residues: Envelope protein 166 (170 aa).

M1 is a topological domain (intravirion). Residues 2 to 22 (FYPVVQVLIGIILVIILILGF) form a helical membrane-spanning segment. Residues 23-170 (YHMKHKPPKK…TVMGIARNVL (148 aa)) are Virion surface-facing.

This sequence belongs to the asfivirus envelope protein p22 family.

The protein localises to the virion membrane. It localises to the host cell membrane. The sequence is that of Envelope protein 166 from Ornithodoros (relapsing fever ticks).